The sequence spans 357 residues: Peptide chain release factor 1 (357 aa).

Q236 carries the N5-methylglutamine modification.

Belongs to the prokaryotic/mitochondrial release factor family. Post-translationally, methylated by PrmC. Methylation increases the termination efficiency of RF1.

Its subcellular location is the cytoplasm. Peptide chain release factor 1 directs the termination of translation in response to the peptide chain termination codons UAG and UAA. The chain is Peptide chain release factor 1 from Mycobacterium marinum (strain ATCC BAA-535 / M).